A 379-amino-acid chain; its full sequence is Putative cyclic ADP-D-ribose synthase TIR2 (379 aa).

In terms of domain architecture, TIR spans 254-379 (KVYDVFISHS…TISWTTGLVK (126 aa)). The active site involves glutamate 335.

Homodimer.

The protein localises to the cytoplasm. With respect to regulation, activated upon phage infection. In terms of biological role, one of 2 TIR-like protein components of the Thoeris antiviral defense system, composed of ThsA, TIR1 (thsB1) and TIR2 (thsB2). Phage infection activates this protein; by 70 minutes post-infection with phage SPO1, TIR2 generates a signal molecule that in turn activates the NAD(+) hydrolase activity of ThsA (tested with B.cereus). The signal is similar to cyclic ADP-D-ribose, but how it differs is unknown. Expression of Thoeris in B.subtilis (strain BEST7003) confers resistance to phages phi29, phi3T, SPBeta, SBSphi11, SBSphi13, SBSphiJ, SPO1 and SPR but not SBSphiC. The TIR paralogs confer resistance to different phages; this subunit confers resistance to phi3T, SPBeta, SBSphi13, SBSphiJ, SPO1 and SPR but not phi29, SBSphi11 or SBSphiC. There is overlap in the phage range for this system, both TIR1 and TIR2 are activated by SBSphi13, SBSphiJ, SPO1 and SPR. Probably hydrolyzes NAD(+) to make a cyclic ADP-D-ribose (cADPR) signaling molecule; might make 3'cADPR. The sequence is that of Putative cyclic ADP-D-ribose synthase TIR2 from Cytobacillus dafuensis (Bacillus dafuensis).